A 124-amino-acid chain; its full sequence is Biogenesis of lysosome-related organelles complex 1 subunit CNL1 (124 aa).

Residues 1-20 (MMSENITAVEPQENNDVEAD) are disordered. Residues 75–98 (IGMAKDLLQKCDDLEKHYDQLDAV) adopt a coiled-coil conformation.

Belongs to the BLOC1S4 family. In terms of assembly, component of the biogenesis of lysosome-related organelles complex-1 (BLOC-1).

The protein resides in the cytoplasm. Functionally, component of the biogenesis of lysosome-related organelles complex-1 (BLOC-1), a complex that is involved in endosomal cargo sorting. This chain is Biogenesis of lysosome-related organelles complex 1 subunit CNL1 (CLN1), found in Kluyveromyces lactis (strain ATCC 8585 / CBS 2359 / DSM 70799 / NBRC 1267 / NRRL Y-1140 / WM37) (Yeast).